The following is a 120-amino-acid chain: NAD(P)H-quinone oxidoreductase subunit 3, chloroplastic (120 aa).

Transmembrane regions (helical) follow at residues isoleucine 9 to glycine 29, methionine 64 to methionine 84, and valine 88 to serine 108.

This sequence belongs to the complex I subunit 3 family. In terms of assembly, NDH is composed of at least 16 different subunits, 5 of which are encoded in the nucleus.

The protein localises to the plastid. Its subcellular location is the chloroplast thylakoid membrane. It catalyses the reaction a plastoquinone + NADH + (n+1) H(+)(in) = a plastoquinol + NAD(+) + n H(+)(out). The enzyme catalyses a plastoquinone + NADPH + (n+1) H(+)(in) = a plastoquinol + NADP(+) + n H(+)(out). NDH shuttles electrons from NAD(P)H:plastoquinone, via FMN and iron-sulfur (Fe-S) centers, to quinones in the photosynthetic chain and possibly in a chloroplast respiratory chain. The immediate electron acceptor for the enzyme in this species is believed to be plastoquinone. Couples the redox reaction to proton translocation, and thus conserves the redox energy in a proton gradient. The chain is NAD(P)H-quinone oxidoreductase subunit 3, chloroplastic from Glycine max (Soybean).